Reading from the N-terminus, the 1051-residue chain is MEVAVEKAAAAAAPAGGPAAAAPSGENEAESRQGPDSESGGEASRLNLLDTCAVCHQNIQSRVPKLLPCLHSFCQRCLPAPQRYLMLTAPALGSAETPPPAPAPAPAPGSPAGGPSPFATQVGVIRCPVCSQECAERHIIDNFFVKDTTEVPSSTVEKSNQVCTSCEDNAEANGFCVECVEWLCKTCIRAHQRVKFTKDHTVRQKEEVSPEAVGVTSQRPVFCPFHKKEQLKLYCETCDKLTCRDCQLLEHKEHRYQFIEEAFQNQKVIIDTLITKLMEKTKYIKYTGNQIQNRIIEINQNQKQVEQDIKVAIFTLMVEINKKGKALLHQLESLAKDHRMKLMQQQQEVAGLSKQLEHVMHFSKWAVSSGSSTALLYSKRLITYRLRHLLRARCDASPVTNTTIQFHCDPSFWAQNIINLGSLVIEDKESQPQMPKQNPVVEQSSQPPGGLPSNQLSKFPTQISLAQLRLQHIQQQVMAQRQQVQRRPAPVGLPNPRMQGPIQQPSISHQHPPPRLINFQNHSPKPNGPVLPPYPQQLRYSPSQNVPRQTTIKPNPLQMAFLAQQAIKQWQISSVQAPPTTASSSSSTPSSPTITSAAGYDGKAFSSPMIDLSAPVGGSYNLPSLPDIDCSSTIMLDNIARKDTGVDHAQPRPPSNRTVQSPNSSVPSPGLAGPVTMTSVHPPIRSPSASSVGSRGSSGSSSKPAGADSTHKVPVVMLEPIRIKQENSGPPENYDFPVVIVKQESDEESRPQNTNYPRSILTSLLLNSSQSSASEETVLRSDAPDSTGDQPGLHQENSSNGKSEWSDASQKSPVHVGETRKEDDPNEDWCAVCQNGGELLCCEKCPKVFHLTCHVPTLTNFPSGEWICTFCRDLSKPEVDYDCDVPSHHSEKRKSEGLTKLTPIDKRKCERLLLFLYCHEMSLAFQDPVPLTVPDYYKIIKNPMDLSTIKKRLQEDYCMYTKPEDFVADFRLIFQNCAEFNEPDSEVANAGIKLESYFEELLKNLYPEKRFPKVEFRHEAEDCKFSDDSDDDFVQPRKKRLKSTEDRQLLK.

A disordered region spans residues 1-42; it reads MEVAVEKAAAAAAPAGGPAAAAPSGENEAESRQGPDSESGGE. Residue lysine 7 forms a Glycyl lysine isopeptide (Lys-Gly) (interchain with G-Cter in SUMO2) linkage. Residues 8–23 show a composition bias toward low complexity; the sequence is AAAAAAPAGGPAAAAP. The segment at 52–77 adopts an RING-type zinc-finger fold; that stretch reads CAVCHQNIQSRVPKLLPCLHSFCQRC. A disordered region spans residues 94-115; it reads SAETPPPAPAPAPAPGSPAGGP. At threonine 97 the chain carries Phosphothreonine. Pro residues predominate over residues 97–109; the sequence is TPPPAPAPAPAPG. Serine 110 is modified (phosphoserine). B box-type zinc fingers lie at residues 158 to 211 and 218 to 259; these read KSNQ…VSPE and QRPV…YQFI. Zn(2+) is bound by residues cysteine 163, cysteine 166, cysteine 187, and histidine 200. Residue lysine 205 forms a Glycyl lysine isopeptide (Lys-Gly) (interchain with G-Cter in SUMO2) linkage. Zn(2+) is bound by residues cysteine 223, histidine 226, cysteine 246, and histidine 251. Residue lysine 276 forms a Glycyl lysine isopeptide (Lys-Gly) (interchain with G-Cter in SUMO2) linkage. A coiled-coil region spans residues 289-359; that stretch reads NQIQNRIIEI…AGLSKQLEHV (71 aa). The interval 429 to 457 is disordered; it reads ESQPQMPKQNPVVEQSSQPPGGLPSNQLS. Residues 431–457 show a composition bias toward polar residues; it reads QPQMPKQNPVVEQSSQPPGGLPSNQLS. Glycyl lysine isopeptide (Lys-Gly) (interchain with G-Cter in SUMO2) cross-links involve residues lysine 436 and lysine 458. Arginine 469 is modified (omega-N-methylarginine). 2 stretches are compositionally biased toward low complexity: residues 479–490 and 501–510; these read AQRQQVQRRPAP and PIQQPSISHQ. Residues 479–551 are disordered; it reads AQRQQVQRRP…PSQNVPRQTT (73 aa). Pro residues predominate over residues 526-535; that stretch reads PNGPVLPPYP. The segment covering 538–551 has biased composition (polar residues); it reads LRYSPSQNVPRQTT. Glycyl lysine isopeptide (Lys-Gly) (interchain with G-Cter in SUMO2) cross-links involve residues lysine 553 and lysine 642. Residues 644–713 are disordered; sequence TGVDHAQPRP…PAGADSTHKV (70 aa). Serine 655, serine 661, and serine 668 each carry phosphoserine. Positions 655–667 are enriched in polar residues; the sequence is SNRTVQSPNSSVP. Residues 686–708 show a composition bias toward low complexity; sequence SPSASSVGSRGSSGSSSKPAGAD. Glycyl lysine isopeptide (Lys-Gly) (interchain with G-Cter in SUMO2) cross-links involve residues lysine 703 and lysine 712. Glycyl lysine isopeptide (Lys-Gly) (interchain with G-Cter in SUMO); alternate cross-links involve residues lysine 724 and lysine 742. Lysine 724 participates in a covalent cross-link: Glycyl lysine isopeptide (Lys-Gly) (interchain with G-Cter in SUMO1); alternate. Glycyl lysine isopeptide (Lys-Gly) (interchain with G-Cter in SUMO2); alternate cross-links involve residues lysine 724 and lysine 742. 2 positions are modified to phosphoserine: serine 745 and serine 769. The interval 755–780 is nuclear receptor binding site (NRBS); the sequence is NYPRSILTSLLLNSSQSSASEETVLR. Residues 771–827 are disordered; that stretch reads SSASEETVLRSDAPDSTGDQPGLHQENSSNGKSEWSDASQKSPVHVGETRKEDDPNE. Residues 795 to 812 show a composition bias toward polar residues; that stretch reads QENSSNGKSEWSDASQKS. A Glycyl lysine isopeptide (Lys-Gly) (interchain with G-Cter in SUMO2) cross-link involves residue lysine 802. Serine 809 carries the phosphoserine modification. A Glycyl lysine isopeptide (Lys-Gly) (interchain with G-Cter in SUMO2) cross-link involves residue lysine 811. Residue serine 812 is modified to Phosphoserine. The residue at position 819 (threonine 819) is a Phosphothreonine. The PHD-type zinc-finger motif lies at 827–874; sequence EDWCAVCQNGGELLCCEKCPKVFHLTCHVPTLTNFPSGEWICTFCRDL. The interaction with histone H3 that is not methylated at 'Lys-4' (H3K4me0) stretch occupies residues 835 to 841; it reads NGGELLC. Residue lysine 876 forms a Glycyl lysine isopeptide (Lys-Gly) (interchain with G-Cter in SUMO2) linkage. A Nuclear localization signal motif is present at residues 892–908; sequence KRKSEGLTKLTPIDKRK. The region spanning 900–1005 is the Bromo domain; that stretch reads KLTPIDKRKC…SYFEELLKNL (106 aa). Residues lysine 950 and lysine 993 each participate in a glycyl lysine isopeptide (Lys-Gly) (interchain with G-Cter in SUMO2) cross-link. The interval 1024–1051 is disordered; the sequence is KFSDDSDDDFVQPRKKRLKSTEDRQLLK. Phosphoserine is present on residues serine 1026 and serine 1029. Residue lysine 1042 forms a Glycyl lysine isopeptide (Lys-Gly) (interchain with G-Cter in SUMO2) linkage. Positions 1042–1051 are enriched in basic and acidic residues; the sequence is KSTEDRQLLK. Serine 1043 is subject to Phosphoserine.

In terms of assembly, interacts (via bromo domain) with histone H3 (via N-terminus), provided that it is not methylated at 'Lys-4' (H3K4me0). Does not interact with histone H3 that is methylated at 'Lys-4' (H3K4me1, H3K4me2 or H3K4me3). Interacts (via bromo domain) with histone H3 (via N-terminus) that is acetylated at 'Lys-23' (H3K23ac). Has the highest affinity for histone H3 that is both unmodified at 'Lys-4' (H3K4me0) and acetylated at 'Lys-23' (H3K23ac). Has very low affinity for histone H3 that is methylated at 'Lys-9' (H3K9me), or acetylated at both 'Lys-9' (H3K9ac) and 'Lys-14' (H3K14ac), or acetylated at 'Lys-27' (H3K27ac) (in vitro). Interacts with TRIM16. Interacts with NR3C2/MCR. Interacts with the ligand-binding domain of estrogen receptors (in vitro). Interaction with DNA-bound estrogen receptors requires the presence of estradiol. Interacts with AR, CARM1, KAT5/TIP60, NCOA2/GRIP1, BRD7, CBX1, CBX3 and CBX5. Part of a coactivator complex containing TRIM24, NCOA2/GRIP1 and CARM1. Interacts with p53/TP53 and PML. In terms of processing, sumoylated. Post-translationally, phosphorylated at Ser-768 by ATM kinase induces ubiquitination and degradation during DNA damage. Undergoes ubiquitination-mediated degradation in response to DNA damage. In terms of tissue distribution, detected in embryonic and adult liver. Detected in zygote and throughout embryogenesis (at protein level). Detected in all adult tissues, with the highest expression level in testis.

The protein localises to the nucleus. Its subcellular location is the cytoplasm. The enzyme catalyses S-ubiquitinyl-[E2 ubiquitin-conjugating enzyme]-L-cysteine + [acceptor protein]-L-lysine = [E2 ubiquitin-conjugating enzyme]-L-cysteine + N(6)-ubiquitinyl-[acceptor protein]-L-lysine.. Its pathway is protein modification; protein ubiquitination. Its function is as follows. Transcriptional coactivator that interacts with numerous nuclear receptors and coactivators and modulates the transcription of target genes. Interacts with chromatin depending on histone H3 modifications, having the highest affinity for histone H3 that is both unmodified at 'Lys-4' (H3K4me0) and acetylated at 'Lys-23' (H3K23ac). Has E3 protein-ubiquitin ligase activity. Promotes ubiquitination and proteasomal degradation of p53/TP53. Plays a role in the regulation of cell proliferation and apoptosis via its effects on p53/TP53 levels. Up-regulates ligand-dependent transcription activation by AR, GCR/NR3C1, thyroid hormone receptor (TR) and ESR1. Modulates transcription activation by retinoic acid (RA) receptors, such as RARA. Plays a role in regulating retinoic acid-dependent proliferation of hepatocytes. Required for normal transition from proliferating neonatal hepatocytes to quiescent adult hepatocytes. Functionally, transcriptional coactivator that interacts with numerous nuclear receptors and coactivators and modulates the transcription of target genes. Interacts with chromatin depending on histone H3 modifications, having the highest affinity for histone H3 that is both unmodified at 'Lys-4' (H3K4me0) and acetylated at 'Lys-23' (H3K23ac). Has E3 protein-ubiquitin ligase activity. During the DNA damage response, participates in an autoregulatory feedback loop with TP53. Early in response to DNA damage, ATM kinase phosphorylates TRIM24 leading to its ubiquitination and degradation. After sufficient DNA repair has occurred, TP53 activates TRIM24 transcription, ultimately leading to TRIM24-mediated TP53 ubiquitination and degradation. Plays a role in the regulation of cell proliferation and apoptosis, at least in part via its effects on p53/TP53 levels. Up-regulates ligand-dependent transcription activation by AR, GCR/NR3C1, thyroid hormone receptor (TR) and ESR1. Modulates transcription activation by retinoic acid (RA) receptors, including RARA. Plays a role in regulating retinoic acid-dependent proliferation of hepatocytes. Also participates in innate immunity by mediating the specific 'Lys-63'-linked ubiquitination of TRAF3 leading to activation of downstream signal transduction of the type I IFN pathway. Additionally, negatively regulates NLRP3/CASP1/IL-1beta-mediated pyroptosis and cell migration probably by ubiquitinating NLRP3. The polypeptide is Transcription intermediary factor 1-alpha (Trim24) (Mus musculus (Mouse)).